Here is a 946-residue protein sequence, read N- to C-terminus: Inhibin beta chain (946 aa).

2 disordered regions span residues 115–142 and 174–194; these read VADR…SSTS and KSRN…RRRR. Low complexity predominate over residues 128–142; the sequence is VSVPTTPNETPSSTS. N-linked (GlcNAc...) asparagine glycans are attached at residues Asn208, Asn217, Asn271, and Asn389. Positions 436–462 are disordered; that stretch reads SPGSHLFNGRGGRTDQRSERDPSHHKY. The span at 447 to 459 shows a compositional bias: basic and acidic residues; that stretch reads GRTDQRSERDPSH. Asn471, Asn484, Asn542, Asn561, Asn566, Asn732, and Asn804 each carry an N-linked (GlcNAc...) asparagine glycan. Disulfide bonds link Cys837/Cys846, Cys845/Cys912, Cys874/Cys943, and Cys878/Cys945.

This sequence belongs to the TGF-beta family. In terms of assembly, homodimer or heterodimer; disulfide-linked. Post-translationally, cleaved in vitro by metalloproteases tok and tld to produce a 30 kDa product. As to expression, widely expressed in larval brains.

It is found in the secreted. Functionally, controls several aspects of neuronal morphogenesis; essential for optic lobe development, EcR-B1 expression in larval brains, mushroom body remodeling, dorsal neuron morphogenesis and motoneuron axon guidance. Ligands Actbeta and daw act redundantly through the Activin receptor Babo and its transcriptional mediator Smad2 (Smox), to regulate neuroblast numbers and proliferation rates in the developing larval brain. The chain is Inhibin beta chain (Actbeta) from Drosophila melanogaster (Fruit fly).